A 218-amino-acid polypeptide reads, in one-letter code: Dual specificity protein phosphatase TpbA (218 aa).

Residues M1 to A28 form the signal peptide. One can recognise a Tyrosine-protein phosphatase domain in the interval D44–L188. Residue D105 is the Proton donor/acceptor of the active site. C132 serves as the catalytic Phosphocysteine intermediate.

The protein belongs to the protein-tyrosine phosphatase family. As to quaternary structure, monomer in solution.

The protein resides in the periplasm. It carries out the reaction O-phospho-L-tyrosyl-[protein] + H2O = L-tyrosyl-[protein] + phosphate. The catalysed reaction is O-phospho-L-threonyl-[protein] + H2O = L-threonyl-[protein] + phosphate. It catalyses the reaction O-phospho-L-seryl-[protein] + H2O = L-seryl-[protein] + phosphate. With respect to regulation, the phosphatase activity is completely inhibited by trisodium orthovanadate, a tyrosine phosphatase specific inhibitor. Its function is as follows. Phosphatase that regulates diverse phenotypes in P.aeruginosa via regulation of the concentration of cellular c-di-GMP. Acts by dephosphorylating the membrane-anchored diguanylate cyclase TpbB at tyrosine and serine/threonine sites, leading to inactivation of TpbB and reduced c-di-GMP production. The reduced cellular c-di-GMP concentration leads to reduced adhesin expression, reduced extracellular polysaccharide (EPS) production, pellicule production, cell aggregation and biofilm formation, and enhanced swimming and swarming. It affects colony morphology and controls rugose colony formation. TpbA also acts as a positive regulator of extracellular DNA (eDNA, a major component of the biofilm matrix) and cell lysis by reducing c-di-GMP concentrations. In vitro shows phosphatase activity toward p-nitrophenyl phosphate (pNPP), tyrosine phosphopeptides and a threonine phosphopeptide. Does not have phosphodiesterases (PDE) activity, and cannot degrade c-di-GMP. In Pseudomonas aeruginosa (strain UCBPP-PA14), this protein is Dual specificity protein phosphatase TpbA.